The sequence spans 417 residues: Serine hydroxymethyltransferase (417 aa).

Residues Leu-121 and 125–127 (GHL) each bind (6S)-5,6,7,8-tetrahydrofolate. Position 229 is an N6-(pyridoxal phosphate)lysine (Lys-229). 355–357 (SPF) is a (6S)-5,6,7,8-tetrahydrofolate binding site.

This sequence belongs to the SHMT family. As to quaternary structure, homodimer. It depends on pyridoxal 5'-phosphate as a cofactor.

It is found in the cytoplasm. It catalyses the reaction (6R)-5,10-methylene-5,6,7,8-tetrahydrofolate + glycine + H2O = (6S)-5,6,7,8-tetrahydrofolate + L-serine. Its pathway is one-carbon metabolism; tetrahydrofolate interconversion. It functions in the pathway amino-acid biosynthesis; glycine biosynthesis; glycine from L-serine: step 1/1. Functionally, catalyzes the reversible interconversion of serine and glycine with tetrahydrofolate (THF) serving as the one-carbon carrier. This reaction serves as the major source of one-carbon groups required for the biosynthesis of purines, thymidylate, methionine, and other important biomolecules. Also exhibits THF-independent aldolase activity toward beta-hydroxyamino acids, producing glycine and aldehydes, via a retro-aldol mechanism. This Buchnera aphidicola subsp. Schizaphis graminum (strain Sg) protein is Serine hydroxymethyltransferase.